We begin with the raw amino-acid sequence, 205 residues long: Imidazole glycerol phosphate synthase subunit HisH (205 aa).

One can recognise a Glutamine amidotransferase type-1 domain in the interval 1-205 (MIALVDYGGG…FFKMALGDKK (205 aa)). The active-site Nucleophile is the Cys-79. Catalysis depends on residues His-181 and Glu-183.

As to quaternary structure, heterodimer of HisH and HisF.

It is found in the cytoplasm. It carries out the reaction 5-[(5-phospho-1-deoxy-D-ribulos-1-ylimino)methylamino]-1-(5-phospho-beta-D-ribosyl)imidazole-4-carboxamide + L-glutamine = D-erythro-1-(imidazol-4-yl)glycerol 3-phosphate + 5-amino-1-(5-phospho-beta-D-ribosyl)imidazole-4-carboxamide + L-glutamate + H(+). The enzyme catalyses L-glutamine + H2O = L-glutamate + NH4(+). The protein operates within amino-acid biosynthesis; L-histidine biosynthesis; L-histidine from 5-phospho-alpha-D-ribose 1-diphosphate: step 5/9. Functionally, IGPS catalyzes the conversion of PRFAR and glutamine to IGP, AICAR and glutamate. The HisH subunit catalyzes the hydrolysis of glutamine to glutamate and ammonia as part of the synthesis of IGP and AICAR. The resulting ammonia molecule is channeled to the active site of HisF. In Dehalococcoides mccartyi (strain CBDB1), this protein is Imidazole glycerol phosphate synthase subunit HisH.